The sequence spans 79 residues: Virulence protein MsgA (79 aa).

It belongs to the DinI family.

Affects survival in macrophages. The chain is Virulence protein MsgA (msgA) from Salmonella typhi.